The primary structure comprises 230 residues: Thymine/uracil-DNA glycosylase (230 aa).

[4Fe-4S] cluster-binding residues include Cys204, Cys211, Cys214, and Cys221.

The protein belongs to the Nth/MutY family. [4Fe-4S] cluster serves as cofactor.

The enzyme catalyses Hydrolyzes mismatched double-stranded DNA and polynucleotides, releasing free thymine.. Functionally, DNA glycosylase that excises thymine from T/G mismatches and uracil from U/G mismatches. Can also process T/GO and U/GO, but not A/G, T/C and U/C. Has weak AP lyase activity. The polypeptide is Thymine/uracil-DNA glycosylase (Pyrobaculum aerophilum (strain ATCC 51768 / DSM 7523 / JCM 9630 / CIP 104966 / NBRC 100827 / IM2)).